A 201-amino-acid polypeptide reads, in one-letter code: dITP/XTP pyrophosphatase (201 aa).

8–13 serves as a coordination point for substrate; that stretch reads TTNENK. Residue aspartate 68 is the Proton acceptor of the active site. Residue aspartate 68 participates in Mg(2+) binding. Substrate contacts are provided by residues serine 69, 155–158, lysine 177, and 182–183; these read FGYD and HR.

It belongs to the HAM1 NTPase family. As to quaternary structure, homodimer. Mg(2+) is required as a cofactor.

The enzyme catalyses XTP + H2O = XMP + diphosphate + H(+). It catalyses the reaction dITP + H2O = dIMP + diphosphate + H(+). The catalysed reaction is ITP + H2O = IMP + diphosphate + H(+). Its function is as follows. Pyrophosphatase that catalyzes the hydrolysis of nucleoside triphosphates to their monophosphate derivatives, with a high preference for the non-canonical purine nucleotides XTP (xanthosine triphosphate), dITP (deoxyinosine triphosphate) and ITP. Seems to function as a house-cleaning enzyme that removes non-canonical purine nucleotides from the nucleotide pool, thus preventing their incorporation into DNA/RNA and avoiding chromosomal lesions. This Borreliella burgdorferi (strain ATCC 35210 / DSM 4680 / CIP 102532 / B31) (Borrelia burgdorferi) protein is dITP/XTP pyrophosphatase.